A 173-amino-acid polypeptide reads, in one-letter code: Orotate phosphoribosyltransferase (173 aa).

5-phospho-alpha-D-ribose 1-diphosphate-binding positions include Arg-87, Lys-88, Lys-91, and 113–121; that span reads EDIATTGQS. Positions 117 and 145 each coordinate orotate.

This sequence belongs to the purine/pyrimidine phosphoribosyltransferase family. PyrE subfamily. Homodimer. The cofactor is Mg(2+).

It catalyses the reaction orotidine 5'-phosphate + diphosphate = orotate + 5-phospho-alpha-D-ribose 1-diphosphate. Its pathway is pyrimidine metabolism; UMP biosynthesis via de novo pathway; UMP from orotate: step 1/2. In terms of biological role, catalyzes the transfer of a ribosyl phosphate group from 5-phosphoribose 1-diphosphate to orotate, leading to the formation of orotidine monophosphate (OMP). In Natronomonas pharaonis (strain ATCC 35678 / DSM 2160 / CIP 103997 / JCM 8858 / NBRC 14720 / NCIMB 2260 / Gabara) (Halobacterium pharaonis), this protein is Orotate phosphoribosyltransferase.